The sequence spans 133 residues: ATP synthase epsilon chain, chloroplastic (133 aa).

It belongs to the ATPase epsilon chain family. F-type ATPases have 2 components, CF(1) - the catalytic core - and CF(0) - the membrane proton channel. CF(1) has five subunits: alpha(3), beta(3), gamma(1), delta(1), epsilon(1). CF(0) has three main subunits: a, b and c.

It localises to the plastid. The protein resides in the chloroplast thylakoid membrane. Functionally, produces ATP from ADP in the presence of a proton gradient across the membrane. The polypeptide is ATP synthase epsilon chain, chloroplastic (Solanum lycopersicum (Tomato)).